The following is a 487-amino-acid chain: ESCRT-I complex subunit vps23 (487 aa).

The region spanning 428–487 (SERELKYYELKRKDEKLDEGIRALNQALHHESIMPASWLKGIKLLARQQFLIRDEMLQYS) is the SB domain.

Component of the ESCRT-I complex (endosomal sorting complex required for transport I).

It is found in the cytoplasm. Its subcellular location is the endosome. It localises to the late endosome membrane. Functionally, component of the ESCRT-I complex, a regulator of vesicular trafficking process. Binds to ubiquitinated cargo proteins and is required for the sorting of endocytic ubiquitinated cargos into multivesicular bodies (MVBs). Mediates the association to the ESCRT-0 complex. The polypeptide is ESCRT-I complex subunit vps23 (sst6) (Schizosaccharomyces pombe (strain 972 / ATCC 24843) (Fission yeast)).